The sequence spans 279 residues: Thioredoxin-like 1-2, chloroplastic (279 aa).

Residues Met-1 to Arg-34 constitute a chloroplast transit peptide. One can recognise a Thioredoxin domain in the interval Pro-61 to Pro-203. Catalysis depends on nucleophile residues Cys-126 and Cys-129. Residues Cys-126 and Cys-129 are joined by a disulfide bond. The disordered stretch occupies residues Gly-242–Arg-279.

This sequence belongs to the thioredoxin family.

It is found in the plastid. Its subcellular location is the chloroplast. Probable thiol-disulfide oxidoreductase that may participate in various redox reactions. The sequence is that of Thioredoxin-like 1-2, chloroplastic from Oryza sativa subsp. japonica (Rice).